We begin with the raw amino-acid sequence, 40 residues long: Large ribosomal subunit protein bL36A (40 aa).

It belongs to the bacterial ribosomal protein bL36 family.

This chain is Large ribosomal subunit protein bL36A, found in Kineococcus radiotolerans (strain ATCC BAA-149 / DSM 14245 / SRS30216).